The sequence spans 223 residues: Pre-protein VI (223 aa).

A propeptide spanning residues 1–27 is cleaved from the precursor; that stretch reads MAYSRLAPHCGLPVYGHHIGNSEMSGG. The segment at 28 to 51 is amphipathic alpha-helix essential for membrane lytic activity; it reads FSWSSLGSSLSSGLSRIGSFLGST. Residues 29–50 form an involved in endosomal membrane lysis region; the sequence is SWSSLGSSLSSGLSRIGSFLGS. Interaction with hexon protein regions lie at residues 45–71 and 206–212; these read GSFL…FLKS and LEDMLGD. Short sequence motifs (nuclear export signal) lie at residues 64-73 and 204-215; these read AKEGFLKSGV and SALEDMLGDGVC. The tract at residues 213–223 is binds to importin alpha/beta, involved in hexon nuclear import; sequence GVCYRSKRYCY.

Belongs to the adenoviridae protein VI family. In terms of assembly, interacts with hexon protein; this interaction allows nuclear import of hexon trimers and possibly pre-capsid assembly. Interacts (via C-terminal NLS) with importin alpha/beta. As to quaternary structure, interacts (via PPxY motif) with host NEDD4 ubiquitine ligase; this interaction might play a role in virus intracellular transport during entry. Part of a complex composed of the core-capsid bridging protein, the endosome lysis protein VI and the hexon-linking protein VIII; these interactions bridge the virus core to the capsid. Interacts with peripentonal hexons; this interaction stabilizes the capsid by gluing two peripentonal hexons together and joining them with an adjacent group-of-nine hexon. Heterodimer with the viral protease; disulfide-linked. Interacts with the viral protease. Ubiquitinated by Nedd4 following partial capsid disassembly; which might play a role in intracellular virus movement during entry. Post-translationally, contains the major nuclear import and export signals. Proteolytically removed during virion maturation. The processing of the C-terminus turns the precursor into a mature viral structural protein and abrogates its ability to promote hexon import and act as a potential chaperone protein.

The protein localises to the host nucleus. Its subcellular location is the host cytoplasm. It is found in the virion. During virus assembly, promotes hexon trimers nuclear import through nuclear pore complexes via an importin alpha/beta-dependent mechanism. By analogy to herpesviruses capsid assembly, might act as a chaperone to promote the formation of the icosahedral capsid. Its function is as follows. Structural component of the virion that provides increased stability to the particle shell through its interaction with the core-capsid bridging protein and the hexon-linking protein VIII. Fibers shedding during virus entry into host cell allows the endosome lysis protein to be exposed as a membrane-lytic peptide. Exhibits pH-independent membrane fragmentation activity and probably mediates viral rapid escape from host endosome via organellar membrane lysis. It is not clear if it then remains partially associated with the capsid and involved in the intracellular microtubule-dependent transport of capsid to the nucleus, or if it is lost during endosomal penetration. Functionally, cofactor that activates the viral protease. Binds to viral protease in a 1:1 ratio. The chain is Pre-protein VI from Pantherophis guttatus (Corn snake).